A 368-amino-acid polypeptide reads, in one-letter code: H-2 class I histocompatibility antigen, D-P alpha chain (368 aa).

Residues 1 to 21 form the signal peptide; the sequence is MAPRTLLLLLAAALAPTQTRA. The tract at residues 22 to 111 is alpha-1; the sequence is GPHSLRYFVT…LLGYYNQSKG (90 aa). Residues 22 to 303 lie on the Extracellular side of the membrane; that stretch reads GPHSLRYFVT…RWEPPPSTDS (282 aa). The N-linked (GlcNAc...) asparagine glycan is linked to N107. The alpha-2 stretch occupies residues 112–203; the sequence is GSHTIQGMRG…ELGNATLLCT (92 aa). A disulfide bond links C122 and C185. Residues N197 and N277 are each glycosylated (N-linked (GlcNAc...) asparagine). The alpha-3 stretch occupies residues 204–295; it reads DPPKAHVTHH…GLPEPLTLRW (92 aa). An Ig-like C1-type domain is found at 206-294; the sequence is PKAHVTHHPR…EGLPEPLTLR (89 aa). Cysteines 224 and 280 form a disulfide. Residues 296-303 are connecting peptide; sequence EPPPSTDS. A helical membrane pass occupies residues 304 to 330; that stretch reads YMVIVAVLVVLGAVFIIGAVVAFVMMM. Residues 331–368 are Cytoplasmic-facing; the sequence is RRNTGGKGGDYTLAPGSQSSEMSLRDCKVMVHDSHSLA. 2 positions are modified to phosphoserine: S350 and S353.

Belongs to the MHC class I family. In terms of assembly, heterodimer of an alpha chain and a beta chain (beta-2-microglobulin).

It localises to the membrane. Involved in the presentation of foreign antigens to the immune system. The chain is H-2 class I histocompatibility antigen, D-P alpha chain (H2-D1) from Mus musculus (Mouse).